The primary structure comprises 157 residues: Large ribosomal subunit protein uL22 (157 aa).

The protein belongs to the universal ribosomal protein uL22 family. Part of the 50S ribosomal subunit.

This protein binds specifically to 23S rRNA. It makes multiple contacts with different domains of the 23S rRNA in the assembled 50S subunit and ribosome. In terms of biological role, the globular domain of the protein is located near the polypeptide exit tunnel on the outside of the subunit, while an extended beta-hairpin is found that lines the wall of the exit tunnel in the center of the 70S ribosome. The sequence is that of Large ribosomal subunit protein uL22 from Staphylothermus marinus (strain ATCC 43588 / DSM 3639 / JCM 9404 / F1).